A 499-amino-acid polypeptide reads, in one-letter code: Patatin-like protein 6 (499 aa).

The region spanning 111–314 is the PNPLA domain; that stretch reads LSIDSGGMRG…AMSNPTAAAI (204 aa). Residues 116 to 119 carry the GGXR motif; the sequence is GGMR. The Nucleophile role is filled by serine 155. Aspartate 301 (proton acceptor) is an active-site residue. The DGA/G motif lies at 301–303; it reads DGG.

It belongs to the patatin family. Highly expressed in siliques and at lower levels in roots and flowers.

Possesses non-specific lipolytic acyl hydrolase (LAH) activity. Hydrolyzes phospholipids as well as galactolipids. May play a role in disease resistance. This Arabidopsis thaliana (Mouse-ear cress) protein is Patatin-like protein 6 (PLP6).